The following is a 469-amino-acid chain: 3-isopropylmalate dehydratase large subunit (469 aa).

[4Fe-4S] cluster is bound by residues C349, C410, and C413.

It belongs to the aconitase/IPM isomerase family. LeuC type 1 subfamily. As to quaternary structure, heterodimer of LeuC and LeuD. The cofactor is [4Fe-4S] cluster.

The enzyme catalyses (2R,3S)-3-isopropylmalate = (2S)-2-isopropylmalate. It functions in the pathway amino-acid biosynthesis; L-leucine biosynthesis; L-leucine from 3-methyl-2-oxobutanoate: step 2/4. In terms of biological role, catalyzes the isomerization between 2-isopropylmalate and 3-isopropylmalate, via the formation of 2-isopropylmaleate. The polypeptide is 3-isopropylmalate dehydratase large subunit (Neisseria gonorrhoeae (strain ATCC 700825 / FA 1090)).